Reading from the N-terminus, the 73-residue chain is Large ribosomal subunit protein uL24 (73 aa).

Positions Asp-51–Met-65 are enriched in basic and acidic residues. A disordered region spans residues Asp-51–Ala-73.

Belongs to the universal ribosomal protein uL24 family. Part of the 50S ribosomal subunit.

Its function is as follows. One of two assembly initiator proteins, it binds directly to the 5'-end of the 23S rRNA, where it nucleates assembly of the 50S subunit. In terms of biological role, one of the proteins that surrounds the polypeptide exit tunnel on the outside of the subunit. The sequence is that of Large ribosomal subunit protein uL24 from Helicobacter pylori (strain Shi470).